A 174-amino-acid chain; its full sequence is Ribosome maturation factor RimP (174 aa).

This sequence belongs to the RimP family.

Its subcellular location is the cytoplasm. In terms of biological role, required for maturation of 30S ribosomal subunits. In Acinetobacter baumannii (strain AB307-0294), this protein is Ribosome maturation factor RimP.